The following is a 477-amino-acid chain: Zinc metalloproteinase/disintegrin (477 aa).

Positions 1-19 (MIQVLLVIICLAVPYQGSS) are cleaved as a signal peptide. The propeptide occupies 20–186 (IILESGNVND…PIKKASQSNL (167 aa)). Residues 192-388 (RYIELVIVAD…QKPQCILNKP (197 aa)) form the Peptidase M12B domain. Ca(2+) contacts are provided by Glu195 and Asp279. Cystine bridges form between Cys303/Cys383, Cys343/Cys367, and Cys345/Cys350. His328 contacts Zn(2+). Glu329 is a catalytic residue. Residues His332 and His338 each coordinate Zn(2+). Ca(2+) is bound by residues Cys383 and Asn386. Residues 389-404 (LRTDTVSTPVSGNELL) constitute a propeptide that is removed on maturation. One can recognise a Disintegrin domain in the interval 396 to 477 (TPVSGNELLE…AGCPRNPFHA (82 aa)). 6 cysteine pairs are disulfide-bonded: Cys410/Cys425, Cys412/Cys420, Cys419/Cys442, Cys433/Cys439, Cys438/Cys463, and Cys451/Cys470. Residues 455–457 (RGD) carry the Cell attachment site motif.

It belongs to the venom metalloproteinase (M12B) family. P-II subfamily. P-IIa sub-subfamily. As to quaternary structure, monomer. Zn(2+) serves as cofactor. In terms of tissue distribution, expressed by the venom gland.

The protein resides in the secreted. Functionally, impairs hemostasis in the envenomed animal. Inhibits platelet aggregation induced by ADP, thrombin, platelet-activating factor and collagen. Acts by inhibiting fibrinogen interaction with platelet receptors GPIIb/GPIIIa (ITGA2B/ITGB3). This chain is Zinc metalloproteinase/disintegrin, found in Gloydius halys (Chinese water mocassin).